The sequence spans 106 residues: Small ribosomal subunit protein bS16 (106 aa).

This sequence belongs to the bacterial ribosomal protein bS16 family.

The sequence is that of Small ribosomal subunit protein bS16 from Protochlamydia amoebophila (strain UWE25).